The following is a 791-amino-acid chain: MGEERWVSLTPEEFDQLQKYSEYSSKKIKDALTEFNEGGSLKQYDPHEPISYDVFKLFMRAYLEVDLPQPLSTHLFLAFSQKPRHETSDHPTEGASNSEANSADTNIQNADNATKADEACAPDTESNMAEKQAPAEDQVAATPLEPPVPRSSSSESPVVYLKDVVCYLSLLETGRPQDKLEFMFRLYDSDENGLLDQAEMDCIVNQMLHIAQYLEWDPTELRPILKEMLQGMDYDRDGFVSLQEWVHGGMTTIPLLVLLGMDDSGSKGDGRHAWTMKHFKKPTYCNFCHIMLMGVRKQGLCCTYCKYTVHERCVSRNIPGCVKTYSKAKRSGEVMQHAWVEGNSSVKCDRCHKSIKCYQSVTARHCVWCRMTFHRKCELSTLCDGGELRDHILLPTSICPITRDRPGEKSDGCVSAKGELVMQYKIIPTPGTHPLLVLVNPKSGGRQGERILRKFHYLLNPKQVFNLDNGGPTPGLNFFRDTPDFRVLACGGDGTVGWILDCIDKANFAKHPPVAVLPLGTGNDLARCLRWGGGYEGGSLTKILKDIEQSPLVMLDRWHLEVIPREEVENGDQVPYSIMNNYFSIGVDASIAHRFHVMREKHPEKFNSRMKNKLWYFEFGTSETFAATCKKLHDHIELECDGVGVDLSNIFLEGIAILNIPSMYGGTNLWGENKKNRAVIRESRKGVTDPKELKFCVQDLSDQLLEVVGLEGAMEMGQIYTGLKSAGRRLAQCASVTIRTNKLLPMQVDGEPWMQPCCTIKITHKNQAPMMMGPPQKSSFFSLRRKSRSKD.

Disordered stretches follow at residues lysine 82–alanine 103 and aspartate 117–serine 154. A compositionally biased stretch (basic and acidic residues) spans proline 83 to threonine 92. Positions glycine 94–alanine 103 are enriched in polar residues. EF-hand domains follow at residues arginine 175–isoleucine 210 and glutamate 220–leucine 255. Ca(2+)-binding residues include aspartate 188, aspartate 190, asparagine 192, glutamate 199, aspartate 233, aspartate 235, aspartate 237, and glutamate 244. 2 consecutive Phorbol-ester/DAG-type zinc fingers follow at residues arginine 271–cysteine 321 and glutamine 336–glycine 385. Residues proline 430–proline 564 form the DAGKc domain. The disordered stretch occupies residues alanine 768–aspartate 791.

The protein belongs to the eukaryotic diacylglycerol kinase family. Predominantly expressed in retina and in a much lesser extent in the brain. Other tissues contain extremely low levels of DGK-gamma.

Its subcellular location is the membrane. The protein localises to the cytoplasm. It is found in the cytosol. It localises to the cytoskeleton. It catalyses the reaction a 1,2-diacyl-sn-glycerol + ATP = a 1,2-diacyl-sn-glycero-3-phosphate + ADP + H(+). The catalysed reaction is 1,2-didecanoyl-sn-glycerol + ATP = 1,2-didecanoyl-sn-glycero-3-phosphate + ADP + H(+). It carries out the reaction 1-octadecanoyl-2-(5Z,8Z,11Z,14Z-eicosatetraenoyl)-sn-glycerol + ATP = 1-octadecanoyl-2-(5Z,8Z,11Z,14Z-eicosatetraenoyl)-sn-glycero-3-phosphate + ADP + H(+). The enzyme catalyses 1,2-di-(9Z-octadecenoyl)-sn-glycerol + ATP = 1,2-di-(9Z-octadecenoyl)-sn-glycero-3-phosphate + ADP + H(+). It catalyses the reaction 1-octadecanoyl-2-(9Z,12Z)-octadecadienoyl-sn-glycerol + ATP = 1-octadecanoyl-2-(9Z,12Z-octadecadienoyl)-sn-glycero-3-phosphate + ADP + H(+). The protein operates within lipid metabolism; glycerolipid metabolism. With respect to regulation, the activity is calcium-dependent. Requires phosphatidylserine for maximal activity. In terms of biological role, diacylglycerol kinase that converts diacylglycerol/DAG into phosphatidic acid/phosphatidate/PA and regulates the respective levels of these two bioactive lipids. Thereby, acts as a central switch between the signaling pathways activated by these second messengers with different cellular targets and opposite effects in numerous biological processes. Has no apparent specificity with regard to the acyl compositions of diacylglycerol. Specifically expressed in the cerebellum where it controls the level of diacylglycerol which in turn regulates the activity of protein kinase C gamma. Through protein kinase C gamma, indirectly regulates the dendritic development of Purkinje cells, cerebellar long term depression and ultimately cerebellar motor coordination. The protein is Diacylglycerol kinase gamma (DGKG) of Homo sapiens (Human).